The chain runs to 505 residues: ATP synthase subunit alpha (505 aa).

ATP is bound at residue 171 to 178; the sequence is GDRQTGKT.

The protein belongs to the ATPase alpha/beta chains family. F-type ATPases have 2 components, CF(1) - the catalytic core - and CF(0) - the membrane proton channel. CF(1) has five subunits: alpha(3), beta(3), gamma(1), delta(1), epsilon(1). CF(0) has three main subunits: a(1), b(2) and c(9-12). The alpha and beta chains form an alternating ring which encloses part of the gamma chain. CF(1) is attached to CF(0) by a central stalk formed by the gamma and epsilon chains, while a peripheral stalk is formed by the delta and b chains.

It localises to the cell inner membrane. The enzyme catalyses ATP + H2O + 4 H(+)(in) = ADP + phosphate + 5 H(+)(out). In terms of biological role, produces ATP from ADP in the presence of a proton gradient across the membrane. The alpha chain is a regulatory subunit. This Nitratiruptor sp. (strain SB155-2) protein is ATP synthase subunit alpha.